The following is a 232-amino-acid chain: Octanoyltransferase (232 aa).

The region spanning 43–231 (DQTPNYFLFV…HFTQLFDCTV (189 aa)) is the BPL/LPL catalytic domain. Residues 88–95 (RGGDITYH), 160–162 (ALG), and 173–175 (GFA) contribute to the substrate site. Cys191 (acyl-thioester intermediate) is an active-site residue.

The protein belongs to the LipB family.

It is found in the cytoplasm. The enzyme catalyses octanoyl-[ACP] + L-lysyl-[protein] = N(6)-octanoyl-L-lysyl-[protein] + holo-[ACP] + H(+). It functions in the pathway protein modification; protein lipoylation via endogenous pathway; protein N(6)-(lipoyl)lysine from octanoyl-[acyl-carrier-protein]: step 1/2. Its function is as follows. Catalyzes the transfer of endogenously produced octanoic acid from octanoyl-acyl-carrier-protein onto the lipoyl domains of lipoate-dependent enzymes. Lipoyl-ACP can also act as a substrate although octanoyl-ACP is likely to be the physiological substrate. The protein is Octanoyltransferase of Flavobacterium psychrophilum (strain ATCC 49511 / DSM 21280 / CIP 103535 / JIP02/86).